A 304-amino-acid polypeptide reads, in one-letter code: GTP cyclohydrolase FolE2 (304 aa).

It belongs to the GTP cyclohydrolase IV family.

The enzyme catalyses GTP + H2O = 7,8-dihydroneopterin 3'-triphosphate + formate + H(+). The protein operates within cofactor biosynthesis; 7,8-dihydroneopterin triphosphate biosynthesis; 7,8-dihydroneopterin triphosphate from GTP: step 1/1. Functionally, converts GTP to 7,8-dihydroneopterin triphosphate. The protein is GTP cyclohydrolase FolE2 of Chromohalobacter salexigens (strain ATCC BAA-138 / DSM 3043 / CIP 106854 / NCIMB 13768 / 1H11).